The primary structure comprises 20 residues: Antifungal protein 2 large subunit (20 aa).

The tract at residues 1 to 20 is disordered; the sequence is PEDPQRRYQEXQREXRXQQE.

As to quaternary structure, heterodimer of a large and a small subunit.

In terms of biological role, possesses antifungal activity against P.infestans but not F.graminearum. The protein is Antifungal protein 2 large subunit of Malva parviflora (Little mallow).